We begin with the raw amino-acid sequence, 312 residues long: Elongation factor Ts (312 aa).

The involved in Mg(2+) ion dislocation from EF-Tu stretch occupies residues 80 to 83 (TDFV).

Belongs to the EF-Ts family.

Its subcellular location is the cytoplasm. Functionally, associates with the EF-Tu.GDP complex and induces the exchange of GDP to GTP. It remains bound to the aminoacyl-tRNA.EF-Tu.GTP complex up to the GTP hydrolysis stage on the ribosome. In Maricaulis maris (strain MCS10) (Caulobacter maris), this protein is Elongation factor Ts.